Reading from the N-terminus, the 264-residue chain is Thymidylate synthase (264 aa).

R21 contributes to the dUMP binding site. A (6R)-5,10-methylene-5,6,7,8-tetrahydrofolate-binding site is contributed by H51. 126-127 (RR) is a binding site for dUMP. The active-site Nucleophile is the C146. DUMP is bound by residues 166–169 (RSAD), N177, and 207–209 (HLY). D169 is a binding site for (6R)-5,10-methylene-5,6,7,8-tetrahydrofolate. A263 lines the (6R)-5,10-methylene-5,6,7,8-tetrahydrofolate pocket.

This sequence belongs to the thymidylate synthase family. Bacterial-type ThyA subfamily. As to quaternary structure, homodimer.

The protein resides in the cytoplasm. The catalysed reaction is dUMP + (6R)-5,10-methylene-5,6,7,8-tetrahydrofolate = 7,8-dihydrofolate + dTMP. The protein operates within pyrimidine metabolism; dTTP biosynthesis. Its function is as follows. Catalyzes the reductive methylation of 2'-deoxyuridine-5'-monophosphate (dUMP) to 2'-deoxythymidine-5'-monophosphate (dTMP) while utilizing 5,10-methylenetetrahydrofolate (mTHF) as the methyl donor and reductant in the reaction, yielding dihydrofolate (DHF) as a by-product. This enzymatic reaction provides an intracellular de novo source of dTMP, an essential precursor for DNA biosynthesis. The chain is Thymidylate synthase from Methylorubrum extorquens (strain CM4 / NCIMB 13688) (Methylobacterium extorquens).